Here is a 2151-residue protein sequence, read N- to C-terminus: Polycystin-1-like protein 3 (2151 aa).

An N-terminal signal peptide occupies residues 1-20 (MLLQRRSWLWLYIRIGVILG). Residues 25–1073 (RKPSIREQHG…IKLLLHVTNN (1049 aa)) lie on the Extracellular side of the membrane. Residues 34–142 (GGNSCYQLNR…CIEKHHFICQ (109 aa)) enclose the C-type lectin domain. Cystine bridges form between cysteine 55–cysteine 141 and cysteine 116–cysteine 133. Residue asparagine 89 is glycosylated (N-linked (GlcNAc...) asparagine). Residues 222-245 (SLTGRPQVTSDTLASSSPPQGTSD) show a composition bias toward polar residues. The tract at residues 222–609 (SLTGRPQVTS…SSSPPWPVIT (388 aa)) is disordered. Over residues 246 to 348 (TPASSSPPQV…ASSSPPQGTS (103 aa)) the composition is skewed to low complexity. 2 stretches are compositionally biased toward polar residues: residues 349–363 (DTPASSSPPQGTLDT) and 371–600 (QGTS…TPAS). 5 N-linked (GlcNAc...) asparagine glycosylation sites follow: asparagine 566, asparagine 579, asparagine 592, asparagine 913, and asparagine 951. Residues 899 to 1061 (TSLNTSTDHF…FIVPRTVDVE (163 aa)) form the GAIN-B domain. Intrachain disulfides connect cysteine 1011–cysteine 1039 and cysteine 1026–cysteine 1041. The segment at 1011–1061 (CYFWDRYNRTWKSDGCQVGPKSTILKTQCLCDHLTFFSSDFFIVPRTVDVE) is GPS. The stachel stretch occupies residues 1045 to 1061 (TFFSSDFFIVPRTVDVE). Residues 1074–1094 (PVGVSLLSSLLGFYILLAMWA) traverse the membrane as a helical segment. Residues 1095–1283 (SRKDREDMQK…NQFTRVQRLS (189 aa)) lie on the Cytoplasmic side of the membrane. Residues 1119–1236 (SHYLIQVYTG…GNCERDRVFT (118 aa)) form the PLAT domain. Residues 1284-1304 (CCMALLLCDMVINIMFWKMGG) form a helical membrane-spanning segment. The Extracellular portion of the chain corresponds to 1305–1320 (TTAKRGTEQLGPLAVT). Residues 1321-1341 (LSELLVSIQTSIILFPIHLIF) traverse the membrane as a helical segment. Residues 1342–1533 (GRLFQLIHPP…FCLFRWLKCS (192 aa)) lie on the Cytoplasmic side of the membrane. A helical membrane pass occupies residues 1534 to 1554 (CWLLLGVISLASAFFITLYSL). Residues 1555 to 1575 (ELDKDQATSWVISMMLSVLQD) lie on the Extracellular side of the membrane. The helical transmembrane segment at 1576–1596 (IFISQPIKVIFLTLLFSLMAN) threads the bilayer. Over 1597–1665 (HMPWLNKDKE…KLTGGTLVQI (69 aa)) the chain is Cytoplasmic. A helical transmembrane segment spans residues 1666–1676 (LFLTLLMTTVY). At 1677–1892 (SAKDSSRFFL…SLTSLQSSER (216 aa)) the chain is on the extracellular side. Residues asparagine 1712 and asparagine 1822 are each glycosylated (N-linked (GlcNAc) asparagine). The chain crosses the membrane as a helical span at residues 1893–1921 (GFAWIVSQVVYYLLVCYYAFIQGCRLKRQ). Topologically, residues 1922 to 1930 (RLAFFTRKR) are cytoplasmic. The chain crosses the membrane as a helical span at residues 1931 to 1949 (NLLDTSIVLISFSILGLSM). The Extracellular portion of the chain corresponds to 1950-1980 (QSLSLLHKKMQQYHCDRDRFISFYEALRVNS). Residues 1981-2002 (AVTHLRGFLLLFATVRVWDLLR) traverse the membrane as a helical segment. Residues 2003 to 2019 (HHAQLQVINKTLSKAWD) lie on the Cytoplasmic side of the membrane. Residues 2020–2044 (EVLGFILIIVVLLSSYAMTFNLLFG) traverse the membrane as a helical segment. Positions 2043 to 2081 (FGWSISDYQSFFRSIVTVVGLLMGTSKHKEVIALYPILG) are channel pore-region. At 2045–2077 (WSISDYQSFFRSIVTVVGLLMGTSKHKEVIALY) the chain is on the extracellular side. The chain crosses the membrane as a helical span at residues 2078-2097 (PILGSLLVLSSIILMGLVII). The Cytoplasmic segment spans residues 2098 to 2151 (NLFVSAILIAFGKERKACEKEATLTDMLLQKLSSLLGIRLHQNPSEEHADNTGY).

It belongs to the polycystin family. As to quaternary structure, heterotetramer with PKD2L1, composed of 3 subunit of PKD2L1 and 1 subunit of PKD1L3. Post-translationally, autoproteolytically processed at the GPS region of the GAIN-B domain; this cleavage modulates receptor activity. In terms of tissue distribution, expressed in a subset of taste receptor cells (type III taste cells) distinct from those involved in bitter, sweet and umami taste. Expressed in circumvallate and foliate taste buds, but not in surrounding non-gustatory lingual epithelium cells. Expressed in testis.

The protein resides in the cell membrane. It catalyses the reaction Ca(2+)(in) = Ca(2+)(out). The enzyme catalyses Na(+)(in) = Na(+)(out). The catalysed reaction is K(+)(in) = K(+)(out). It carries out the reaction Mg(2+)(in) = Mg(2+)(out). With respect to regulation, the non-selective cation channel is gated following an off-response property by acid: gated open after the removal of acid stimulus, but not during acid application. Non-selective cation channel activity is inhibited by capsaicin. Regulation of non-selective cation channel activity by external Ca(2+) is bimodal, first sensitizing and subsequently inactivating the current. The apo (closed) heterotetramer has an asymmetric selectivity filter (SF) guarded by Lys-2069 in absence of Ca(2+). However, Ca(2+)-entrance to the SF vestibule is accompanied by a swing motion of Lys-2069 on PKD1L3. Pore-forming subunit of a heterotetrameric, non-selective cation channel that is permeable to Ca(2+). Also shows permeability towards NA(1+), K(+) and Mg(2+). Heterotetrameric complex channel is activated by external low pH and Ca(2+), but opens only when the extracellular pH rises again and after the removal of acid stimulus. May act as a sour taste receptor in gustatory cells; however, its contribution to sour taste perception is unclear in vivo and may be indirect. This chain is Polycystin-1-like protein 3, found in Mus musculus (Mouse).